Consider the following 336-residue polypeptide: Ornithine carbamoyltransferase, catabolic (336 aa).

Carbamoyl phosphate-binding positions include 57-60 (STRT), glutamine 84, arginine 108, and 135-138 (HPTQ). Residues asparagine 168, aspartate 232, and 236-237 (SM) contribute to the L-ornithine site. Carbamoyl phosphate contacts are provided by residues 274–275 (CL) and arginine 321.

It belongs to the aspartate/ornithine carbamoyltransferase superfamily. OTCase family.

It is found in the cytoplasm. The enzyme catalyses carbamoyl phosphate + L-ornithine = L-citrulline + phosphate + H(+). It participates in amino-acid degradation; L-arginine degradation via ADI pathway; carbamoyl phosphate from L-arginine: step 2/2. Functionally, reversibly catalyzes the transfer of the carbamoyl group from carbamoyl phosphate (CP) to the N(epsilon) atom of ornithine (ORN) to produce L-citrulline. This is Ornithine carbamoyltransferase, catabolic from Burkholderia mallei (strain ATCC 23344).